The chain runs to 386 residues: MATTKSFLILFFMILATTSSTCAKLEEMVTVLSIDGGGIKGIIPAIILEFLEGQLQEVDNNKDARLADYFDVIGGTSTGGLLTAMITTPNENNRPFAAAKDIVPFYLEHGPHIFNYSGSIIGPMYDGKYLLQVLQEKLGETRVHQALTEVAISSFDIKTNKPVIFTKSNLAKSPELDAKMYDICYSTAAAPIYFPPHYFITHTSNGDIYEFNLVDGGVATVGDPALLSLSVATRLAQEDPAFSSIKSLDYKQMLLLSLGTGTNSEFDKTYTAQEAAKWGPLRWMLAIQQMTNAASSYMTDYYISTVFQARHSQNNYLRVQENALTGTTTEMDDASEANMELLVQVGETLLKKPVSKDSPETYEEALKRFAKLLSDRKKLRANKASY.

The first 23 residues, 1–23 (MATTKSFLILFFMILATTSSTCA), serve as a signal peptide directing secretion. The PNPLA domain maps to 32 to 229 (LSIDGGGIKG…TVGDPALLSL (198 aa)). A GXGXXG motif is present at residues 36 to 41 (GGGIKG). The GXSXG motif lies at 75–79 (GTSTG). Serine 77 serves as the catalytic Nucleophile. Residue asparagine 115 is glycosylated (N-linked (GlcNAc...) asparagine). Residue aspartate 215 is the Proton acceptor of the active site. Residues 215-217 (DGG) carry the DGA/G motif. Residues 321 to 384 (ENALTGTTTE…DRKKLRANKA (64 aa)) are a coiled coil.

The protein belongs to the patatin family. In terms of tissue distribution, tuber.

The protein resides in the vacuole. Probable lipolytic acyl hydrolase (LAH), an activity which is thought to be involved in the response of tubers to pathogens. The chain is Patatin group M-3 from Solanum tuberosum (Potato).